A 474-amino-acid polypeptide reads, in one-letter code: Alpha-galactosidase (474 aa).

The first 22 residues, 1–22, serve as a signal peptide directing secretion; the sequence is MINFSLLTSIVLLASKVVGVSP. 2 disulfide bridges follow: cysteine 43–cysteine 75 and cysteine 122–cysteine 152. An N-linked (GlcNAc...) asparagine glycan is attached at asparagine 44. Positions 73, 74, and 148 each coordinate substrate. Aspartate 150 (nucleophile) is an active-site residue. Asparagine 176 carries an N-linked (GlcNAc...) asparagine glycan. Arginine 206 contacts substrate. The active-site Proton donor is aspartate 210. 2 disulfide bridges follow: cysteine 222–cysteine 238 and cysteine 224–cysteine 231. Glutamine 252 lines the substrate pocket. Residues asparagine 271, asparagine 414, asparagine 423, asparagine 436, and asparagine 455 are each glycosylated (N-linked (GlcNAc...) asparagine).

Belongs to the glycosyl hydrolase 27 family. Homotetramer.

It is found in the secreted. The catalysed reaction is Hydrolysis of terminal, non-reducing alpha-D-galactose residues in alpha-D-galactosides, including galactose oligosaccharides, galactomannans and galactolipids.. The polypeptide is Alpha-galactosidase (MEL) (Torulaspora delbrueckii (Yeast)).